The chain runs to 289 residues: Glycine--tRNA ligase alpha subunit (289 aa).

It belongs to the class-II aminoacyl-tRNA synthetase family. In terms of assembly, tetramer of two alpha and two beta subunits.

Its subcellular location is the cytoplasm. The enzyme catalyses tRNA(Gly) + glycine + ATP = glycyl-tRNA(Gly) + AMP + diphosphate. The protein is Glycine--tRNA ligase alpha subunit of Rickettsia akari (strain Hartford).